A 295-amino-acid polypeptide reads, in one-letter code: Bifunctional protein FolD (295 aa).

NADP(+) contacts are provided by residues 166-168, Ser-195, and Ile-236; that span reads GRS.

It belongs to the tetrahydrofolate dehydrogenase/cyclohydrolase family. In terms of assembly, homodimer.

The enzyme catalyses (6R)-5,10-methylene-5,6,7,8-tetrahydrofolate + NADP(+) = (6R)-5,10-methenyltetrahydrofolate + NADPH. It carries out the reaction (6R)-5,10-methenyltetrahydrofolate + H2O = (6R)-10-formyltetrahydrofolate + H(+). The protein operates within one-carbon metabolism; tetrahydrofolate interconversion. Its function is as follows. Catalyzes the oxidation of 5,10-methylenetetrahydrofolate to 5,10-methenyltetrahydrofolate and then the hydrolysis of 5,10-methenyltetrahydrofolate to 10-formyltetrahydrofolate. The sequence is that of Bifunctional protein FolD from Chlorobium chlorochromatii (strain CaD3).